The primary structure comprises 73 residues: Translation initiation factor IF-1 (73 aa).

The region spanning 1 to 73 is the S1-like domain; it reads MGKKEEAFEV…TKGRIVYRER (73 aa).

Belongs to the IF-1 family. Component of the 30S ribosomal translation pre-initiation complex which assembles on the 30S ribosome in the order IF-2 and IF-3, IF-1 and N-formylmethionyl-tRNA(fMet); mRNA recruitment can occur at any time during PIC assembly.

Its subcellular location is the cytoplasm. One of the essential components for the initiation of protein synthesis. Stabilizes the binding of IF-2 and IF-3 on the 30S subunit to which N-formylmethionyl-tRNA(fMet) subsequently binds. Helps modulate mRNA selection, yielding the 30S pre-initiation complex (PIC). Upon addition of the 50S ribosomal subunit IF-1, IF-2 and IF-3 are released leaving the mature 70S translation initiation complex. This chain is Translation initiation factor IF-1, found in Rhodopirellula baltica (strain DSM 10527 / NCIMB 13988 / SH1).